A 295-amino-acid polypeptide reads, in one-letter code: Glucose-1-phosphate thymidylyltransferase (295 aa).

Aspartate 111 and aspartate 226 together coordinate Mg(2+).

It belongs to the glucose-1-phosphate thymidylyltransferase family. In terms of assembly, homotetramer. It depends on Mg(2+) as a cofactor.

The catalysed reaction is dTTP + alpha-D-glucose 1-phosphate + H(+) = dTDP-alpha-D-glucose + diphosphate. The protein operates within carbohydrate biosynthesis; dTDP-L-rhamnose biosynthesis. It functions in the pathway bacterial outer membrane biogenesis; LPS O-antigen biosynthesis. Catalyzes the formation of dTDP-glucose, from dTTP and glucose 1-phosphate, as well as its pyrophosphorolysis. The sequence is that of Glucose-1-phosphate thymidylyltransferase (rmlA) from Xanthomonas campestris pv. campestris (strain B100).